A 160-amino-acid chain; its full sequence is Transcription elongation factor GreA (160 aa).

A coiled-coil region spans residues 4–70 (QKQYPMTQEG…IEQDIQRIEH (67 aa)).

This sequence belongs to the GreA/GreB family.

Its function is as follows. Necessary for efficient RNA polymerase transcription elongation past template-encoded arresting sites. The arresting sites in DNA have the property of trapping a certain fraction of elongating RNA polymerases that pass through, resulting in locked ternary complexes. Cleavage of the nascent transcript by cleavage factors such as GreA or GreB allows the resumption of elongation from the new 3'terminus. GreA releases sequences of 2 to 3 nucleotides. This is Transcription elongation factor GreA from Staphylococcus carnosus (strain TM300).